Here is a 109-residue protein sequence, read N- to C-terminus: Protein TAR1 (109 aa).

Positions 62–109 (HFTNNWDPRHTGFSPSMTSCSKEHRQGPATKLPSSNYNSDVEDARFQI) are disordered.

It localises to the mitochondrion. In terms of biological role, may be involved in mtDNA stability or mitochondrial gene expression regulation at the post-transcriptional level. In Kluyveromyces lactis (strain ATCC 8585 / CBS 2359 / DSM 70799 / NBRC 1267 / NRRL Y-1140 / WM37) (Yeast), this protein is Protein TAR1 (TAR1-A).